The primary structure comprises 65 residues: Small vasohibin-binding protein (65 aa).

The segment covering 1–22 (MEPACRKDKQKQQTPTRGDRTK) has biased composition (basic and acidic residues). A disordered region spans residues 1–30 (MEPACRKDKQKQQTPTRGDRTKQKTAQQEL). The stretch at 31-51 (KQRQRAEIYALNKVMTELEQQ) forms a coiled coil.

It belongs to the SVBP family.

The protein resides in the cytoplasm. It is found in the secreted. The protein localises to the cytoskeleton. In terms of biological role, enhances the tyrosine carboxypeptidase activity of vash1 and vash2, thereby promoting the removal of the C-terminal tyrosine residue of alpha-tubulin. Also required to enhance the solubility and secretion of vash1 and vash2. May play a role in axon and excitatory synapse formation. The sequence is that of Small vasohibin-binding protein from Danio rerio (Zebrafish).